The sequence spans 101 residues: Trp operon repressor homolog (101 aa).

A DNA-binding region spans residues 59–82; it reads QREIQQNLNTSAATITRGSNMIKT.

Belongs to the TrpR family. In terms of assembly, homodimer.

It localises to the cytoplasm. Functionally, this protein is an aporepressor. When complexed with L-tryptophan it binds the operator region of the trp operon and prevents the initiation of transcription. The polypeptide is Trp operon repressor homolog (Haemophilus influenzae (strain 86-028NP)).